The sequence spans 347 residues: NADH-ubiquinone oxidoreductase chain 2 (347 aa).

A run of 11 helical transmembrane segments spans residues 3-23 (PPIF…VMTS), 25-45 (HWML…PILM), 59-79 (YFLT…INLL), 96-116 (ILMT…FWVP), 122-142 (IPLS…LSVL), 149-169 (INPN…GWGG), 178-198 (ILAY…LYNP), 201-221 (MILN…LFML), 237-257 (MPLI…LPPL), 274-294 (EMII…YFYM), and 325-345 (FLPP…MISI).

The protein belongs to the complex I subunit 2 family. In terms of assembly, core subunit of respiratory chain NADH dehydrogenase (Complex I) which is composed of 45 different subunits. Interacts with TMEM242.

It localises to the mitochondrion inner membrane. It carries out the reaction a ubiquinone + NADH + 5 H(+)(in) = a ubiquinol + NAD(+) + 4 H(+)(out). Core subunit of the mitochondrial membrane respiratory chain NADH dehydrogenase (Complex I) which catalyzes electron transfer from NADH through the respiratory chain, using ubiquinone as an electron acceptor. Essential for the catalytic activity and assembly of complex I. This chain is NADH-ubiquinone oxidoreductase chain 2, found in Genetta servalina (Servaline genet).